An 804-amino-acid polypeptide reads, in one-letter code: Leucine--tRNA ligase (804 aa).

The 'HIGH' region signature appears at 40-51; the sequence is PYPSGAGLHVGH. Residues 576–580 carry the 'KMSKS' region motif; it reads KMSKS. Lys579 is a binding site for ATP.

This sequence belongs to the class-I aminoacyl-tRNA synthetase family.

It is found in the cytoplasm. It carries out the reaction tRNA(Leu) + L-leucine + ATP = L-leucyl-tRNA(Leu) + AMP + diphosphate. The sequence is that of Leucine--tRNA ligase from Staphylococcus epidermidis (strain ATCC 35984 / DSM 28319 / BCRC 17069 / CCUG 31568 / BM 3577 / RP62A).